Consider the following 1388-residue polypeptide: Rho-associated protein kinase 2 (1388 aa).

The tract at residues 1–24 is disordered; the sequence is MSRPPPTGKMPGAPEAAAGDGAGA. Positions 92 to 354 constitute a Protein kinase domain; the sequence is YDVVKVIGRG…VEEIKSASFF (263 aa). ATP is bound by residues 98–106 and Lys121; that span reads IGRGAFGEV. Catalysis depends on Asp214, which acts as the Proton acceptor. The 69-residue stretch at 357–425 folds into the AGC-kinase C-terminal domain; the sequence is DQWNWDNIRE…FRENLLLSDS (69 aa). Residues 363–784 are interaction with PPP1R12A; sequence NIRETAAPVV…LNELLKQKDV (422 aa). An interaction with NPM1 region spans residues 373-420; that stretch reads PELSSDIDSSNFDDIEDDKGDVETFPIPKAFVGNQLPFIGFTYFRENL. Thr414 bears the Phosphothreonine; by ROCK2 mark. Coiled coils occupy residues 439–1024 and 1052–1131; these read SEES…EKQL and SDTD…IGMD. The region spanning 497-573 is the REM-1 domain; it reads TLRQLEREKA…LDEANALLRT (77 aa). Over residues 513–530 the composition is skewed to basic and acidic residues; it reads AEYQRKADHEADKKRNLE. The disordered stretch occupies residues 513–532; that stretch reads AEYQRKADHEADKKRNLEND. Tyr722 carries the phosphotyrosine; by SRC modification. The RhoBD domain occupies 979 to 1047; it reads TSDVANLANE…LAEIMNRKEP (69 aa). Positions 979–1047 are RHOA binding; it reads TSDVANLANE…LAEIMNRKEP (69 aa). Phosphoserine is present on Ser1137. Residues 1150–1349 form the PH domain; that stretch reads ESRLEGWLSL…WVSRLVKKIP (200 aa). The residue at position 1212 (Thr1212) is a Phosphothreonine. A Phorbol-ester/DAG-type zinc finger spans residues 1260–1315; the sequence is GHEFIPTLYHFPTNCEACMKPLWHMFKPPPALECSRCHIKCHKDHMDKKEEIIAPC. The disordered stretch occupies residues 1345–1388; that stretch reads VKKIPKKPPAPDPFARSSPRTSMKIQQNQSIRRPSRQLAPNKPS. Residues Ser1362 and Ser1374 each carry the phosphoserine modification. Residues 1362-1376 show a composition bias toward polar residues; sequence SPRTSMKIQQNQSIR.

Belongs to the protein kinase superfamily. AGC Ser/Thr protein kinase family. Homodimer. Interacts with IRS1. Interacts with RAF1. Interacts with RHOA (activated by GTP), RHOB, RHOC. Interacts with PPP1R12A. Interacts with EP300. Interacts with CHORDC1. Interacts with BRCA2. Interacts with NPM1; this interaction enhances its activity. Interacts with SORL1. Interacts with PJVK. Mg(2+) is required as a cofactor. Post-translationally, autophosphorylated. Phosphorylation at Tyr-722 reduces its binding to RHOA and is crucial for focal adhesion dynamics. Dephosphorylation by PTPN11 stimulates its RHOA binding activity. In terms of processing, cleaved by granzyme B during apoptosis. This leads to constitutive activation of the kinase and membrane blebbing. Highly expressed in brain, lung, liver, skeletal muscle, kidney and testis.

It is found in the cytoplasm. It localises to the cell membrane. The protein localises to the nucleus. Its subcellular location is the cytoskeleton. The protein resides in the microtubule organizing center. It is found in the centrosome. The catalysed reaction is L-seryl-[protein] + ATP = O-phospho-L-seryl-[protein] + ADP + H(+). The enzyme catalyses L-threonyl-[protein] + ATP = O-phospho-L-threonyl-[protein] + ADP + H(+). Its activity is regulated as follows. Activated by RHOA binding. Inhibited by Y-27632. In terms of biological role, protein kinase which is a key regulator of actin cytoskeleton and cell polarity. Involved in regulation of smooth muscle contraction, actin cytoskeleton organization, stress fiber and focal adhesion formation, neurite retraction, cell adhesion and motility via phosphorylation of ADD1, BRCA2, CNN1, EZR, DPYSL2, EP300, MSN, MYL9/MLC2, NPM1, RDX, PPP1R12A and VIM. Phosphorylates SORL1 and IRF4. Acts as a negative regulator of VEGF-induced angiogenic endothelial cell activation. Positively regulates the activation of p42/MAPK1-p44/MAPK3 and of p90RSK/RPS6KA1 during myogenic differentiation. Plays an important role in the timely initiation of centrosome duplication. Inhibits keratinocyte terminal differentiation. May regulate closure of the eyelids and ventral body wall through organization of actomyosin bundles. Plays a critical role in the regulation of spine and synaptic properties in the hippocampus. Plays a role in placental homeostasis during the perinatal period. Plays an important role in generating the circadian rhythm of the aortic myofilament Ca(2+) sensitivity and vascular contractility by modulating the myosin light chain phosphorylation. The polypeptide is Rho-associated protein kinase 2 (Rock2) (Rattus norvegicus (Rat)).